Here is a 301-residue protein sequence, read N- to C-terminus: Formylmethanofuran--tetrahydromethanopterin formyltransferase (301 aa).

This sequence belongs to the FTR family. As to quaternary structure, homotetramer.

The protein resides in the cytoplasm. It catalyses the reaction N-formylmethanofuran + 5,6,7,8-tetrahydromethanopterin + H(+) = N(5)-formyl-5,6,7,8-tetrahydromethanopterin + methanofuran. It functions in the pathway one-carbon metabolism; methanogenesis from CO(2); 5,10-methenyl-5,6,7,8-tetrahydromethanopterin from CO(2): step 2/3. Its function is as follows. Catalyzes the reversible transfer of a formyl group from formylmethanofuran (formyl-MFR) to tetrahydromethanopterin (H(4)MPT) to produce 5-formyl tetrahydromethanopterin (5-formyl-H(4)MPT) and methanofuran (MFR). In Methanocaldococcus jannaschii (strain ATCC 43067 / DSM 2661 / JAL-1 / JCM 10045 / NBRC 100440) (Methanococcus jannaschii), this protein is Formylmethanofuran--tetrahydromethanopterin formyltransferase.